A 692-amino-acid polypeptide reads, in one-letter code: Elongation factor G (692 aa).

Residues E8–T282 form the tr-type G domain. GTP contacts are provided by residues A17–T24, D81–H85, and N135–D138. Positions P285 to D304 are disordered. Residues V290–D304 are compositionally biased toward basic and acidic residues.

Belongs to the TRAFAC class translation factor GTPase superfamily. Classic translation factor GTPase family. EF-G/EF-2 subfamily.

It localises to the cytoplasm. Functionally, catalyzes the GTP-dependent ribosomal translocation step during translation elongation. During this step, the ribosome changes from the pre-translocational (PRE) to the post-translocational (POST) state as the newly formed A-site-bound peptidyl-tRNA and P-site-bound deacylated tRNA move to the P and E sites, respectively. Catalyzes the coordinated movement of the two tRNA molecules, the mRNA and conformational changes in the ribosome. The chain is Elongation factor G from Desulfitobacterium hafniense (strain DSM 10664 / DCB-2).